Here is a 797-residue protein sequence, read N- to C-terminus: Homoaconitase, mitochondrial (797 aa).

A mitochondrion-targeting transit peptide spans 1–47 (MVARFVPSAMTVLVARRGLAMASTRRGWRGLAVNLKPAAGRQWRQAY). Positions 404, 471, and 474 each coordinate [4Fe-4S] cluster.

The protein belongs to the aconitase/IPM isomerase family. [4Fe-4S] cluster is required as a cofactor.

The protein resides in the mitochondrion. The enzyme catalyses (2R,3S)-homoisocitrate = cis-homoaconitate + H2O. The protein operates within amino-acid biosynthesis; L-lysine biosynthesis via AAA pathway; L-alpha-aminoadipate from 2-oxoglutarate: step 3/5. Catalyzes the reversible hydration of cis-homoaconitate to (2R,3S)-homoisocitrate, a step in the alpha-aminoadipate pathway for lysine biosynthesis. The protein is Homoaconitase, mitochondrial (LYS4) of Chaetomium globosum (strain ATCC 6205 / CBS 148.51 / DSM 1962 / NBRC 6347 / NRRL 1970) (Soil fungus).